A 292-amino-acid polypeptide reads, in one-letter code: N-acetylneuraminate lyase (292 aa).

Positions 47 and 48 each coordinate aceneuramate. Y136 acts as the Proton donor in catalysis. The active-site Schiff-base intermediate with substrate is K164. Residues T166, G188, D190, E191, and S207 each coordinate aceneuramate.

Belongs to the DapA family. NanA subfamily. In terms of assembly, homotetramer.

Its subcellular location is the cytoplasm. The enzyme catalyses aceneuramate = aldehydo-N-acetyl-D-mannosamine + pyruvate. Its pathway is amino-sugar metabolism; N-acetylneuraminate degradation; D-fructose 6-phosphate from N-acetylneuraminate: step 1/5. In terms of biological role, catalyzes the reversible aldol cleavage of N-acetylneuraminic acid (sialic acid; Neu5Ac) to form pyruvate and N-acetylmannosamine (ManNAc) via a Schiff base intermediate. The chain is N-acetylneuraminate lyase from Histophilus somni (strain 129Pt) (Haemophilus somnus).